Consider the following 282-residue polypeptide: MRTEKEILNLVSEFAYQRSNVKIIALEGSRTNENIKKDKFQDYDFAFFVSDIEYFTHEESWLSLFGELLFIQKPEDMELFPPDLDYGYSYIMYFKDGIKMDITLINLKDLNRYFSDSDGLVKILVDKDNLVTQEIVPDDSNYWLKKPTEREFYDCCNEFWSVSTYVAKGVFRREILFALDHFNNILRPELLRMISWYIGFNRGFDFSLGKNYKFINKYLTDKEFNMLLATFEMNGYRKTYQSFKLCCELFKYYSNKVSCLGNYNYPNYEKNIENFIRNNYEN.

The catalysed reaction is streptomycin + ATP = 6-O-adenylylstreptomycin + diphosphate. Functionally, required for streptomycin resistance. Adenylates streptomycin on the O-6 residue. This chain is Aminoglycoside 6-adenylyltransferase, found in Staphylococcus aureus.